The following is a 295-amino-acid chain: uncharacterized protein (295 aa).

It belongs to the NAD(P)-dependent epimerase/dehydratase family.

This is an uncharacterized protein from Schizosaccharomyces pombe (strain 972 / ATCC 24843) (Fission yeast).